The following is a 283-amino-acid chain: MLIIETLPLLRQHIRRLRLEGKRIALVPTMGNLHDGHMKLVDEAQDRADVVVASIFVNPMQFDRPDDLARYPRTLQEDCEKLNKRKVDIIFTPSPDQIYPQGTEGQTYVEVPGLSTMLEGASRPGHFRGVSTIVSKLFNLVQPDIACFGEKDFQQLQLIRKMVADMGYDIEIVGVPIVRAKDGLALSSRNGYLTAEQRKIAPGLYKVMSELGEKLQAGERDLEEMIAIAGQELNEKGFRPDDIQIRDADTLFELTDASKRVVILMSAWLGQARLIDNKIIELS.

Residue 30–37 (MGNLHDGH) participates in ATP binding. Residue His-37 is the Proton donor of the active site. Gln-61 serves as a coordination point for (R)-pantoate. Residue Gln-61 coordinates beta-alanine. 149-152 (GEKD) is a binding site for ATP. (R)-pantoate is bound at residue Gln-155. ATP-binding positions include Val-178 and 186 to 189 (LSSR).

This sequence belongs to the pantothenate synthetase family. Homodimer.

The protein resides in the cytoplasm. The enzyme catalyses (R)-pantoate + beta-alanine + ATP = (R)-pantothenate + AMP + diphosphate + H(+). It participates in cofactor biosynthesis; (R)-pantothenate biosynthesis; (R)-pantothenate from (R)-pantoate and beta-alanine: step 1/1. Catalyzes the condensation of pantoate with beta-alanine in an ATP-dependent reaction via a pantoyl-adenylate intermediate. The sequence is that of Pantothenate synthetase from Salmonella arizonae (strain ATCC BAA-731 / CDC346-86 / RSK2980).